The primary structure comprises 314 residues: Olfactory receptor 14A2 (314 aa).

At 1–26 (MANVTLVTGFLLMGFSNIQKLRILYG) the chain is on the extracellular side. Asparagine 3 carries N-linked (GlcNAc...) asparagine glycosylation. A helical membrane pass occupies residues 27–47 (VLFLLIYLAALMSNLLIITLI). Residues 48–55 (TLDVKLQT) are Cytoplasmic-facing. A helical membrane pass occupies residues 56-76 (PMYFFLKNLSFLDVFLVSVPI). Over 77–91 (PKFIVNNLTHNNSIS) the chain is Extracellular. Residue asparagine 83 is glycosylated (N-linked (GlcNAc...) asparagine). Residues 92 to 112 (ILGCAFQLLLMTSFSAGEIFI) form a helical membrane-spanning segment. A disulfide bond links cysteine 95 and cysteine 177. Residues 113–136 (LTAMSYDRYVAICCPLNYEVIMNT) lie on the Cytoplasmic side of the membrane. Residues 137 to 157 (GVCVLMASVSWAIGGLFGTAY) traverse the membrane as a helical segment. Residues 158 to 193 (TAGTFSMPFCGSSVIPQFFCDVPSLLRISCSETLMV) are Extracellular-facing. A helical transmembrane segment spans residues 194-214 (IYAGIGVGACLSISCFICIVI). The Cytoplasmic segment spans residues 215–237 (SYIYIFSTVLKIPTTKGQSKAFS). Residues 238 to 258 (TCFPHLTVFTVFIITAYFVYL) form a helical membrane-spanning segment. The Extracellular portion of the chain corresponds to 259–267 (KPPSNSPSV). The chain crosses the membrane as a helical span at residues 268 to 290 (IDRLLSVIYTVMPPVFNPVTYSL). Residues 291–314 (RNNDMKCALIRLLQKTYGQEAYFI) are Cytoplasmic-facing.

It belongs to the G-protein coupled receptor 1 family.

It localises to the cell membrane. Its function is as follows. Odorant receptor. This chain is Olfactory receptor 14A2 (OR14A2), found in Homo sapiens (Human).